The following is a 63-amino-acid chain: Large ribosomal subunit protein bL28 (63 aa).

It belongs to the bacterial ribosomal protein bL28 family.

The chain is Large ribosomal subunit protein bL28 from Clostridium perfringens (strain SM101 / Type A).